The sequence spans 514 residues: Probable transposase for insertion sequence element IS1353 (514 aa).

Residues 172–216 (KGDTSLEQRHEALLRELAELESQNQRLRMENAILEKASELIKKDM) are a coiled coil. Residues 346–510 (HASAPNTKWL…SPIEYRHAVG (165 aa)) form the Integrase catalytic domain. Mg(2+) is bound by residues D357 and D417.

The protein belongs to the transposase 8 family.

Its function is as follows. Probably involved in the transposition of insertion sequence IS1353. This Shigella flexneri protein is Probable transposase for insertion sequence element IS1353.